Here is a 141-residue protein sequence, read N- to C-terminus: Nucleoside diphosphate kinase (141 aa).

Lysine 11, phenylalanine 59, arginine 87, threonine 93, arginine 104, and asparagine 114 together coordinate ATP. The active-site Pros-phosphohistidine intermediate is the histidine 117.

The protein belongs to the NDK family. In terms of assembly, homotetramer. It depends on Mg(2+) as a cofactor.

It localises to the cytoplasm. It carries out the reaction a 2'-deoxyribonucleoside 5'-diphosphate + ATP = a 2'-deoxyribonucleoside 5'-triphosphate + ADP. The catalysed reaction is a ribonucleoside 5'-diphosphate + ATP = a ribonucleoside 5'-triphosphate + ADP. In terms of biological role, major role in the synthesis of nucleoside triphosphates other than ATP. The ATP gamma phosphate is transferred to the NDP beta phosphate via a ping-pong mechanism, using a phosphorylated active-site intermediate. This is Nucleoside diphosphate kinase from Hamiltonella defensa subsp. Acyrthosiphon pisum (strain 5AT).